Consider the following 319-residue polypeptide: Methionyl-tRNA formyltransferase (319 aa).

113 to 116 serves as a coordination point for (6S)-5,6,7,8-tetrahydrofolate; the sequence is SLLP.

This sequence belongs to the Fmt family.

The enzyme catalyses L-methionyl-tRNA(fMet) + (6R)-10-formyltetrahydrofolate = N-formyl-L-methionyl-tRNA(fMet) + (6S)-5,6,7,8-tetrahydrofolate + H(+). Attaches a formyl group to the free amino group of methionyl-tRNA(fMet). The formyl group appears to play a dual role in the initiator identity of N-formylmethionyl-tRNA by promoting its recognition by IF2 and preventing the misappropriation of this tRNA by the elongation apparatus. This Hamiltonella defensa subsp. Acyrthosiphon pisum (strain 5AT) protein is Methionyl-tRNA formyltransferase.